An 893-amino-acid chain; its full sequence is ATPase family gene 2 protein homolog A (893 aa).

Positions 1-10 are enriched in basic residues; that stretch reads MSSKKNRKRL. Positions 1–26 are disordered; the sequence is MSSKKNRKRLNQSAENGSSLPSAASS. The interval 1-237 is required for interaction with AFG2B and CINP; that stretch reads MSSKKNRKRL…SLELSLQLSQ (237 aa). Over residues 11 to 25 the composition is skewed to polar residues; it reads NQSAENGSSLPSAAS. The residue at position 272 (T272) is a Phosphothreonine. Residues S274 and S279 each carry the phosphoserine modification. ATP contacts are provided by residues 394 to 401 and 668 to 675; these read GPPGTGKT and GPPGCSKT. A Glycyl lysine isopeptide (Lys-Gly) (interchain with G-Cter in SUMO2) cross-link involves residue K859.

This sequence belongs to the AAA ATPase family. AFG2 subfamily. In terms of assembly, part of the 55LCC heterohexameric ATPase complex composed at least of AIRIM, AFG2A, AFG2B and CINP. Associates with pre-60S ribosomal particles.

It localises to the cytoplasm. It is found in the mitochondrion. The protein localises to the cytoskeleton. Its subcellular location is the spindle. It catalyses the reaction ATP + H2O = ADP + phosphate + H(+). AFG2A alone display limited ATPase activity and is not regulated by RNA or DNA binding. In the context of 55LCC heterohexameric ATPase complex, the ATPase activity increases and is stimulated by DNA binding and inhibited in presence of RNA. In terms of biological role, ATP-dependent chaperone part of the 55LCC heterohexameric ATPase complex which is chromatin-associated and promotes replisome proteostasis to maintain replication fork progression and genome stability. Required for replication fork progression, sister chromatid cohesion, and chromosome stability. The ATPase activity is specifically enhanced by replication fork DNA and is coupled to cysteine protease-dependent cleavage of replisome substrates in response to replication fork damage. Uses ATPase activity to process replisome substrates in S-phase, facilitating their proteolytic turnover from chromatin to ensure DNA replication and mitotic fidelity. Plays an essential role in the cytoplasmic maturation steps of pre-60S ribosomal particles by promoting the release of shuttling protein RSL24D1/RLP24 from the pre-ribosomal particles. May be involved in morphological and functional mitochondrial transformations during spermatogenesis. The protein is ATPase family gene 2 protein homolog A of Homo sapiens (Human).